The sequence spans 688 residues: Polyphosphate kinase (688 aa).

Asn-45 serves as a coordination point for ATP. 2 residues coordinate Mg(2+): Arg-375 and Arg-405. A PLD phosphodiesterase domain is found at 430–464 (PGLKIHAKLFLISRKENGEVVRYAHIGTGNFNEKT). The active-site Phosphohistidine intermediate is His-435. The ATP site is built by Tyr-468, Arg-564, and His-592.

The protein belongs to the polyphosphate kinase 1 (PPK1) family. Mg(2+) serves as cofactor. An intermediate of this reaction is the autophosphorylated ppk in which a phosphate is covalently linked to a histidine residue through a N-P bond.

The enzyme catalyses [phosphate](n) + ATP = [phosphate](n+1) + ADP. Catalyzes the reversible transfer of the terminal phosphate of ATP to form a long-chain polyphosphate (polyP). The polypeptide is Polyphosphate kinase (Escherichia coli O157:H7).